Here is a 343-residue protein sequence, read N- to C-terminus: CRISPR-associated endonuclease Cas1 1 (343 aa).

Mn(2+) contacts are provided by Glu-166, His-234, and Glu-249.

It belongs to the CRISPR-associated endonuclease Cas1 family. Homodimer, forms a heterotetramer with a Cas2 homodimer. It depends on Mg(2+) as a cofactor. Requires Mn(2+) as cofactor.

Functionally, CRISPR (clustered regularly interspaced short palindromic repeat), is an adaptive immune system that provides protection against mobile genetic elements (viruses, transposable elements and conjugative plasmids). CRISPR clusters contain spacers, sequences complementary to antecedent mobile elements, and target invading nucleic acids. CRISPR clusters are transcribed and processed into CRISPR RNA (crRNA). Acts as a dsDNA endonuclease. Involved in the integration of spacer DNA into the CRISPR cassette. This is CRISPR-associated endonuclease Cas1 1 from Moorella thermoacetica (strain ATCC 39073 / JCM 9320).